The chain runs to 478 residues: Probable cytosolic Fe-S cluster assembly factor AGAP009023 (478 aa).

Residues C23, C69, C72, C75, C189, C245, C396, and C400 each contribute to the [4Fe-4S] cluster site.

It belongs to the NARF family.

Component of the cytosolic iron-sulfur (Fe/S) protein assembly machinery. Required for maturation of extramitochondrial Fe/S proteins. The sequence is that of Probable cytosolic Fe-S cluster assembly factor AGAP009023 from Anopheles gambiae (African malaria mosquito).